The primary structure comprises 385 residues: S-adenosylmethionine synthase (385 aa).

ATP is bound at residue His-15. Asp-17 is a Mg(2+) binding site. Glu-43 contacts K(+). L-methionine-binding residues include Glu-56 and Gln-99. The segment at 99–109 is flexible loop; it reads QSPDINQGVDR. ATP is bound by residues 164–166, 230–231, Asp-239, 245–246, Ala-262, and Lys-266; these read DAK, RF, and RK. Asp-239 lines the L-methionine pocket. Lys-270 contacts L-methionine.

Belongs to the AdoMet synthase family. As to quaternary structure, homotetramer; dimer of dimers. Mg(2+) serves as cofactor. The cofactor is K(+).

It localises to the cytoplasm. The enzyme catalyses L-methionine + ATP + H2O = S-adenosyl-L-methionine + phosphate + diphosphate. Its pathway is amino-acid biosynthesis; S-adenosyl-L-methionine biosynthesis; S-adenosyl-L-methionine from L-methionine: step 1/1. Its function is as follows. Catalyzes the formation of S-adenosylmethionine (AdoMet) from methionine and ATP. The overall synthetic reaction is composed of two sequential steps, AdoMet formation and the subsequent tripolyphosphate hydrolysis which occurs prior to release of AdoMet from the enzyme. This Sodalis glossinidius (strain morsitans) protein is S-adenosylmethionine synthase.